Reading from the N-terminus, the 217-residue chain is MRLRHKPYAMDRINEYSHIVIGNPEERAGNWKEVFGNEQPIHIEVGTGRGRFMYDMAKANPHINYIGIEKFTSVVVDALDKLIEEELPNLKLINKDAEDLTVFFAKGEIDRVYLNFSDPWPKKRHTKRRLTYKTFLRNYEEVLVEGGEIHFKTDNQGLFEYSLMSMAEYGMLLTYLSLDLHNSDFEGNIMTEYEEKFSSKGHRIYRVEAKYRTEPMQ.

4 residues coordinate S-adenosyl-L-methionine: E44, E69, D96, and D118. D118 is a catalytic residue. Substrate contacts are provided by residues K122, D154, and 191–194 (TEYE).

The protein belongs to the class I-like SAM-binding methyltransferase superfamily. TrmB family.

It carries out the reaction guanosine(46) in tRNA + S-adenosyl-L-methionine = N(7)-methylguanosine(46) in tRNA + S-adenosyl-L-homocysteine. It functions in the pathway tRNA modification; N(7)-methylguanine-tRNA biosynthesis. Its function is as follows. Catalyzes the formation of N(7)-methylguanine at position 46 (m7G46) in tRNA. This Bacillus anthracis (strain CDC 684 / NRRL 3495) protein is tRNA (guanine-N(7)-)-methyltransferase.